We begin with the raw amino-acid sequence, 595 residues long: MSLFRTYVRVLSYLNQEKNAFLLICTANITLAIITIAEPILFGHVIDTIADKSDTLVTLAVWMCFGISNIIAYVLVARGADRLAHRCRLTVLEKSFARIISMPLIWHQQRGTSHALHTLLRATDSMSSIWLEFMRQHLSTFVALFVLVPVTFKMNWRLSIVLMVLAILYILIARLVMQKTKNGQAAVEHYHHNLFKHITDSISNVSIVQSYNRITEETSALHQHTNNLLSAQTPVLNWWALASGLNRMASTISIVCVLLLGAFFVIKGQLSVGEVVTFVGFSQLMIGRLDQISGFINLAVSSQAKLQEFFDMEDSTFQTNEPANLPSLPNVKGAIQFHHVTYEFPNSSQGVFDISFEVKAGQTVAIVGPTGAGKTTLINLLQRVYDPTVGYISIDGININSINRESLRKALATVFQDAGLFDRTIRDNISIGKTGATDEELYEATKTASAHDFILKKSKNYDTLVGERGSQLSGGERQRLAIARAILKNAPILILDEATSALDVETEIRVKNAIDCISQNRTTFIIAHRLSTIRNADLVLFLDQGRLIEKGSFQELINKDGHFYKLLKAGGLTINQPATKEKDDNIIPLRKAMAL.

Transmembrane regions (helical) follow at residues 21–41 (FLLICTANITLAIITIAEPIL), 56–76 (LVTLAVWMCFGISNIIAYVLV), 129–149 (IWLEFMRQHLSTFVALFVLVP), 158–178 (LSIVLMVLAILYILIARLVMQ), and 252–272 (ISIVCVLLLGAFFVIKGQLSV). The ABC transmembrane type-1 domain maps to 21 to 301 (FLLICTANIT…ISGFINLAVS (281 aa)). An ABC transporter domain is found at 335–569 (IQFHHVTYEF…DGHFYKLLKA (235 aa)). 368–375 (GPTGAGKT) lines the ATP pocket.

This sequence belongs to the ABC transporter superfamily. Beta-(1--&gt;2)glucan exporter (TC 3.A.1.108.1) family. As to quaternary structure, homodimer.

The protein localises to the cell inner membrane. The enzyme catalyses [(1-&gt;2)-beta-D-glucosyl](n)(in) + ATP + H2O = [(1-&gt;2)-beta-D-glucosyl](n)(out) + ADP + phosphate + H(+). In terms of biological role, involved in beta-(1--&gt;2)glucan export. Transmembrane domains (TMD) form a pore in the inner membrane and the ATP-binding domain (NBD) is responsible for energy generation. This Bartonella bacilliformis (strain ATCC 35685 / KC583 / Herrer 020/F12,63) protein is Beta-(1--&gt;2)glucan export ATP-binding/permease protein NdvA.